We begin with the raw amino-acid sequence, 365 residues long: Ribosomal RNA large subunit methyltransferase M (365 aa).

Residues S194, C227–G230, D246, D266, and D284 contribute to the S-adenosyl-L-methionine site. K313 (proton acceptor) is an active-site residue.

This sequence belongs to the class I-like SAM-binding methyltransferase superfamily. RNA methyltransferase RlmE family. RlmM subfamily. Monomer.

The protein resides in the cytoplasm. It carries out the reaction cytidine(2498) in 23S rRNA + S-adenosyl-L-methionine = 2'-O-methylcytidine(2498) in 23S rRNA + S-adenosyl-L-homocysteine + H(+). In terms of biological role, catalyzes the 2'-O-methylation at nucleotide C2498 in 23S rRNA. This Pasteurella multocida (strain Pm70) protein is Ribosomal RNA large subunit methyltransferase M.